Reading from the N-terminus, the 316-residue chain is 4-hydroxy-3-methylbut-2-enyl diphosphate reductase (316 aa).

Cysteine 17 serves as a coordination point for [4Fe-4S] cluster. Residues histidine 46 and histidine 79 each contribute to the (2E)-4-hydroxy-3-methylbut-2-enyl diphosphate site. The dimethylallyl diphosphate site is built by histidine 46 and histidine 79. Isopentenyl diphosphate-binding residues include histidine 46 and histidine 79. Cysteine 101 provides a ligand contact to [4Fe-4S] cluster. Residue histidine 129 coordinates (2E)-4-hydroxy-3-methylbut-2-enyl diphosphate. Histidine 129 is a binding site for dimethylallyl diphosphate. Histidine 129 contributes to the isopentenyl diphosphate binding site. Catalysis depends on glutamate 131, which acts as the Proton donor. (2E)-4-hydroxy-3-methylbut-2-enyl diphosphate is bound at residue threonine 170. Cysteine 200 provides a ligand contact to [4Fe-4S] cluster. 4 residues coordinate (2E)-4-hydroxy-3-methylbut-2-enyl diphosphate: serine 228, serine 229, asparagine 230, and serine 273. Dimethylallyl diphosphate contacts are provided by serine 228, serine 229, asparagine 230, and serine 273. Isopentenyl diphosphate contacts are provided by serine 228, serine 229, asparagine 230, and serine 273.

The protein belongs to the IspH family. The cofactor is [4Fe-4S] cluster.

The catalysed reaction is isopentenyl diphosphate + 2 oxidized [2Fe-2S]-[ferredoxin] + H2O = (2E)-4-hydroxy-3-methylbut-2-enyl diphosphate + 2 reduced [2Fe-2S]-[ferredoxin] + 2 H(+). It carries out the reaction dimethylallyl diphosphate + 2 oxidized [2Fe-2S]-[ferredoxin] + H2O = (2E)-4-hydroxy-3-methylbut-2-enyl diphosphate + 2 reduced [2Fe-2S]-[ferredoxin] + 2 H(+). It functions in the pathway isoprenoid biosynthesis; dimethylallyl diphosphate biosynthesis; dimethylallyl diphosphate from (2E)-4-hydroxy-3-methylbutenyl diphosphate: step 1/1. The protein operates within isoprenoid biosynthesis; isopentenyl diphosphate biosynthesis via DXP pathway; isopentenyl diphosphate from 1-deoxy-D-xylulose 5-phosphate: step 6/6. Functionally, catalyzes the conversion of 1-hydroxy-2-methyl-2-(E)-butenyl 4-diphosphate (HMBPP) into a mixture of isopentenyl diphosphate (IPP) and dimethylallyl diphosphate (DMAPP). Acts in the terminal step of the DOXP/MEP pathway for isoprenoid precursor biosynthesis. This is 4-hydroxy-3-methylbut-2-enyl diphosphate reductase from Ruegeria pomeroyi (strain ATCC 700808 / DSM 15171 / DSS-3) (Silicibacter pomeroyi).